The primary structure comprises 251 residues: Aquaporin (251 aa).

The Cytoplasmic portion of the chain corresponds to 1–11; that stretch reads MAKEALKTLQS. The chain crosses the membrane as a helical span at residues 12-32; that stretch reads MFGEMVASFVFGFAVYSAILG. Topologically, residues 33–42 are extracellular; the sequence is SSISQSSADK. A helical transmembrane segment spans residues 43-63; that stretch reads VIVGLTVGFSGIGVIYSFCDV. Residues 64–86 are Cytoplasmic-facing; it reads TIAHFNPAITLAAILTSKIDVLQ. The short motif at 69 to 71 is the NPA element; it reads NPA. The helical transmembrane segment at 87–107 threads the bilayer; the sequence is GLGYMLAQYIGFMLAVCALLV. Topologically, residues 108-133 are extracellular; sequence CSPVEYKETLDTIRPGPTDFGATSLN. Residues 134–154 form a helical membrane-spanning segment; the sequence is VFFAEFFLTAIFVHIVFATAV. Residues 155-179 lie on the Cytoplasmic side of the membrane; that stretch reads NPYKPKVDTEGKFVDPDEKEPVDRR. A helical membrane pass occupies residues 180–200; it reads ITAPLCIGLTLGFLAFMGLAS. The Extracellular portion of the chain corresponds to 201–224; that stretch reads SGGAFNPGLTFAPMAMSNTWSHFW. Residues 206 to 208 carry the NPG motif; sequence NPG. The helical transmembrane segment at 225–245 threads the bilayer; it reads IYLGGQYLGGLTGGLLQVLVL. Residues 246 to 251 lie on the Cytoplasmic side of the membrane; the sequence is YKLSSD.

This sequence belongs to the MIP/aquaporin (TC 1.A.8) family.

It is found in the cell membrane. Its function is as follows. Water channel required to facilitate the transport of water across membranes. Involved in osmotolerance. This Encephalitozoon intestinalis (Microsporidian parasite) protein is Aquaporin (AQP).